Reading from the N-terminus, the 516-residue chain is GMP synthase [glutamine-hydrolyzing] (516 aa).

A Glutamine amidotransferase type-1 domain is found at S7 to D203. Residue C84 is the Nucleophile of the active site. Residues H177 and E179 contribute to the active site. Residues W204–R391 form the GMPS ATP-PPase domain. Position 231-237 (S231–T237) interacts with ATP.

In terms of assembly, homodimer.

The enzyme catalyses XMP + L-glutamine + ATP + H2O = GMP + L-glutamate + AMP + diphosphate + 2 H(+). It participates in purine metabolism; GMP biosynthesis; GMP from XMP (L-Gln route): step 1/1. In terms of biological role, catalyzes the synthesis of GMP from XMP. This is GMP synthase [glutamine-hydrolyzing] from Chlorobaculum tepidum (strain ATCC 49652 / DSM 12025 / NBRC 103806 / TLS) (Chlorobium tepidum).